The chain runs to 296 residues: Large ribosomal subunit protein uL15m (296 aa).

Residues 1 to 21 (MAGPLQGGGARALDLLRGLPR) constitute a mitochondrion transit peptide. Positions 22-66 (VSLANLKPNPGSKKPERRPRGRRRGRKCGRGHKGERQRGTRPRLG) are disordered. Basic residues predominate over residues 36–52 (PERRPRGRRRGRKCGRG).

The protein belongs to the universal ribosomal protein uL15 family. In terms of assembly, component of the mitochondrial large ribosomal subunit (mt-LSU). Mature mammalian 55S mitochondrial ribosomes consist of a small (28S) and a large (39S) subunit. The 28S small subunit contains a 12S ribosomal RNA (12S mt-rRNA) and 30 different proteins. The 39S large subunit contains a 16S rRNA (16S mt-rRNA), a copy of mitochondrial valine transfer RNA (mt-tRNA(Val)), which plays an integral structural role, and 52 different proteins.

The protein localises to the mitochondrion. This chain is Large ribosomal subunit protein uL15m (MRPL15), found in Homo sapiens (Human).